Consider the following 248-residue polypeptide: Triosephosphate isomerase (248 aa).

Substrate contacts are provided by Asn-11 and Lys-13. His-95 (electrophile) is an active-site residue. The active-site Proton acceptor is Glu-165.

It belongs to the triosephosphate isomerase family. As to quaternary structure, homodimer.

It is found in the cytoplasm. The catalysed reaction is D-glyceraldehyde 3-phosphate = dihydroxyacetone phosphate. It carries out the reaction dihydroxyacetone phosphate = methylglyoxal + phosphate. It participates in carbohydrate degradation; glycolysis; D-glyceraldehyde 3-phosphate from glycerone phosphate: step 1/1. Its pathway is carbohydrate biosynthesis; gluconeogenesis. In terms of biological role, triosephosphate isomerase is an extremely efficient metabolic enzyme that catalyzes the interconversion between dihydroxyacetone phosphate (DHAP) and D-glyceraldehyde-3-phosphate (G3P) in glycolysis and gluconeogenesis. Its function is as follows. It is also responsible for the non-negligible production of methylglyoxal a reactive cytotoxic side-product that modifies and can alter proteins, DNA and lipids. The sequence is that of Triosephosphate isomerase (tpi1) from Oryzias latipes (Japanese rice fish).